A 115-amino-acid polypeptide reads, in one-letter code: Yop proteins translocation protein M (115 aa).

A disordered region spans residues 19 to 39 (HGGQAGRLTETNPLTENSHQI). Residues 27-39 (TETNPLTENSHQI) show a composition bias toward polar residues.

Functionally, belongs to an operon involved in the translocation of Yop proteins across the bacterial membranes or in the specific control of this function. This is Yop proteins translocation protein M (yscM) from Yersinia enterocolitica.